The sequence spans 245 residues: Small ribosomal subunit protein uS3 (245 aa).

Residues 39–107 (IRKAIREKLK…EVRVNLVEIR (69 aa)) enclose the KH type-2 domain. Residues 216 to 245 (DKRLETSGQSRARANTNQRGPASGAQAAGA) form a disordered region. Positions 221-235 (TSGQSRARANTNQRG) are enriched in polar residues.

This sequence belongs to the universal ribosomal protein uS3 family. In terms of assembly, part of the 30S ribosomal subunit. Forms a tight complex with proteins S10 and S14.

Its function is as follows. Binds the lower part of the 30S subunit head. Binds mRNA in the 70S ribosome, positioning it for translation. The chain is Small ribosomal subunit protein uS3 from Hyphomonas neptunium (strain ATCC 15444).